The chain runs to 1242 residues: ATP-dependent helicase/nuclease subunit A (1242 aa).

The UvrD-like helicase ATP-binding domain maps to 12 to 487 (SRWTDEQWKA…IDLASNFRSR (476 aa)). 33–40 (AAAGSGKT) is a binding site for ATP. A UvrD-like helicase C-terminal domain is found at 514-808 (AAQLKYGADY…RVMTIHSSKG (295 aa)).

This sequence belongs to the helicase family. AddA subfamily. As to quaternary structure, heterodimer of AddA and AddB/RexB. Mg(2+) serves as cofactor.

It catalyses the reaction Couples ATP hydrolysis with the unwinding of duplex DNA by translocating in the 3'-5' direction.. It carries out the reaction ATP + H2O = ADP + phosphate + H(+). Functionally, the heterodimer acts as both an ATP-dependent DNA helicase and an ATP-dependent, dual-direction single-stranded exonuclease. Recognizes the chi site generating a DNA molecule suitable for the initiation of homologous recombination. The AddA nuclease domain is required for chi fragment generation; this subunit has the helicase and 3' -&gt; 5' nuclease activities. This is ATP-dependent helicase/nuclease subunit A from Geobacillus thermodenitrificans (strain NG80-2).